The primary structure comprises 192 residues: Phosphoheptose isomerase (192 aa).

The 156-residue stretch at 37–192 folds into the SIS domain; the sequence is LADSFKAGGK…IQLIEKEMVK (156 aa). 52 to 54 provides a ligand contact to substrate; the sequence is NGG. 2 residues coordinate Zn(2+): H61 and E65. Substrate contacts are provided by residues E65, 93 to 94, 119 to 121, S124, and Q172; these read ND and STS. Residues Q172 and H180 each contribute to the Zn(2+) site.

This sequence belongs to the SIS family. GmhA subfamily. As to quaternary structure, homotetramer. Requires Zn(2+) as cofactor.

The protein localises to the cytoplasm. It catalyses the reaction 2 D-sedoheptulose 7-phosphate = D-glycero-alpha-D-manno-heptose 7-phosphate + D-glycero-beta-D-manno-heptose 7-phosphate. Its pathway is carbohydrate biosynthesis; D-glycero-D-manno-heptose 7-phosphate biosynthesis; D-glycero-alpha-D-manno-heptose 7-phosphate and D-glycero-beta-D-manno-heptose 7-phosphate from sedoheptulose 7-phosphate: step 1/1. Catalyzes the isomerization of sedoheptulose 7-phosphate in D-glycero-D-manno-heptose 7-phosphate. In Escherichia coli O139:H28 (strain E24377A / ETEC), this protein is Phosphoheptose isomerase.